Here is a 367-residue protein sequence, read N- to C-terminus: tRNA/tmRNA (uracil-C(5))-methyltransferase (367 aa).

5 residues coordinate S-adenosyl-L-methionine: Gln-191, Tyr-218, Asn-223, Glu-239, and Asp-299. The active-site Nucleophile is the Cys-324. The active-site Proton acceptor is the Glu-358.

Belongs to the class I-like SAM-binding methyltransferase superfamily. RNA M5U methyltransferase family. TrmA subfamily.

It catalyses the reaction uridine(54) in tRNA + S-adenosyl-L-methionine = 5-methyluridine(54) in tRNA + S-adenosyl-L-homocysteine + H(+). The enzyme catalyses uridine(341) in tmRNA + S-adenosyl-L-methionine = 5-methyluridine(341) in tmRNA + S-adenosyl-L-homocysteine + H(+). In terms of biological role, dual-specificity methyltransferase that catalyzes the formation of 5-methyluridine at position 54 (m5U54) in all tRNAs, and that of position 341 (m5U341) in tmRNA (transfer-mRNA). This is tRNA/tmRNA (uracil-C(5))-methyltransferase from Campylobacter concisus (strain 13826).